The primary structure comprises 623 residues: tRNA uridine 5-carboxymethylaminomethyl modification enzyme MnmG (623 aa).

12 to 17 lines the FAD pocket; it reads GAGHAG. An NAD(+)-binding site is contributed by 272–286; that stretch reads GPRYCPSIEDKINRF.

It belongs to the MnmG family. As to quaternary structure, homodimer. Heterotetramer of two MnmE and two MnmG subunits. Requires FAD as cofactor.

The protein localises to the cytoplasm. Its function is as follows. NAD-binding protein involved in the addition of a carboxymethylaminomethyl (cmnm) group at the wobble position (U34) of certain tRNAs, forming tRNA-cmnm(5)s(2)U34. The protein is tRNA uridine 5-carboxymethylaminomethyl modification enzyme MnmG of Flavobacterium psychrophilum (strain ATCC 49511 / DSM 21280 / CIP 103535 / JIP02/86).